Here is a 299-residue protein sequence, read N- to C-terminus: Telomere repeat-binding factor 2 (299 aa).

The 61-residue stretch at 1–61 folds into the HTH myb-type domain; the sequence is MGAPKQKWTP…KWRNISVTAL (61 aa). Positions 28–57 form a DNA-binding region, H-T-H motif; the sequence is WRTILSDTEFSLILKSRSNVDLKDKWRNIS. The disordered stretch occupies residues 93 to 116; that stretch reads LTNDDERAKPTSPGGSGGGSPRTC. The 69-residue stretch at 121-189 folds into the H15 domain; that stretch reads SITSLDKIIF…KIKHKYRFSS (69 aa). Positions 243–288 form a coiled coil; sequence EAAEAAARAVAEAEFAITEAEQAAKEAERAEAEAEAAQIFAKAAMK.

This sequence belongs to the histone H1/H5 family. SMH subfamily. As to quaternary structure, forms a homodimer and heterodimers with TRB1 or TRB3. Interacts with TRB1 and TRB3. In terms of tissue distribution, ubiquitous.

It is found in the nucleus. The protein localises to the nucleolus. Its subcellular location is the chromosome. In terms of biological role, binds preferentially double-stranded telomeric repeats, but it can also bind to the single G-rich telomeric strand. In Arabidopsis thaliana (Mouse-ear cress), this protein is Telomere repeat-binding factor 2 (TRB2).